A 372-amino-acid chain; its full sequence is Alanine racemase (372 aa).

Lysine 35 acts as the Proton acceptor; specific for D-alanine in catalysis. The residue at position 35 (lysine 35) is an N6-(pyridoxal phosphate)lysine. Arginine 143 is a binding site for substrate. The Proton acceptor; specific for L-alanine role is filled by tyrosine 268. Methionine 316 contributes to the substrate binding site.

Belongs to the alanine racemase family. The cofactor is pyridoxal 5'-phosphate.

It catalyses the reaction L-alanine = D-alanine. The protein operates within amino-acid biosynthesis; D-alanine biosynthesis; D-alanine from L-alanine: step 1/1. Catalyzes the interconversion of L-alanine and D-alanine. May also act on other amino acids. This chain is Alanine racemase (alr), found in Shewanella frigidimarina (strain NCIMB 400).